Here is a 962-residue protein sequence, read N- to C-terminus: Alpha-glucan phosphorylase 1 (962 aa).

The N-terminal 63 residues, 1-63, are a transit peptide targeting the chloroplast; sequence MDTMRISGVS…RSFLSVKSIS (63 aa). The tract at residues 525 to 552 is disordered; it reads AKDAQNGVKTEQEEEKTAGEEEEDEVIP. Lysine 808 bears the N6-(pyridoxal phosphate)lysine mark.

The protein belongs to the glycogen phosphorylase family. Pyridoxal 5'-phosphate serves as cofactor.

The protein localises to the plastid. Its subcellular location is the chloroplast stroma. It catalyses the reaction [(1-&gt;4)-alpha-D-glucosyl](n) + phosphate = [(1-&gt;4)-alpha-D-glucosyl](n-1) + alpha-D-glucose 1-phosphate. Its function is as follows. Phosphorylase is an important allosteric enzyme in carbohydrate metabolism. Enzymes from different sources differ in their regulatory mechanisms and in their natural substrates. However, all known phosphorylases share catalytic and structural properties. May be not required for the degradation of starch, but the phosphorolysis of starch may play an important role in water stress tolerance. The polypeptide is Alpha-glucan phosphorylase 1 (PHS1) (Arabidopsis thaliana (Mouse-ear cress)).